The primary structure comprises 99 residues: Small ribosomal subunit protein uS17 (99 aa).

It belongs to the universal ribosomal protein uS17 family. Part of the 30S ribosomal subunit.

Functionally, one of the primary rRNA binding proteins, it binds specifically to the 5'-end of 16S ribosomal RNA. The protein is Small ribosomal subunit protein uS17 of Thermosipho africanus (strain TCF52B).